Reading from the N-terminus, the 410-residue chain is Cysteine desulfurase IscS (410 aa).

Pyridoxal 5'-phosphate contacts are provided by residues 80-81, Asn160, Gln188, and 208-210; these read AT and SGH. Lys211 carries the post-translational modification N6-(pyridoxal phosphate)lysine. Thr248 contacts pyridoxal 5'-phosphate. The active-site Cysteine persulfide intermediate is the Cys334. Cys334 serves as a coordination point for [2Fe-2S] cluster.

This sequence belongs to the class-V pyridoxal-phosphate-dependent aminotransferase family. NifS/IscS subfamily. As to quaternary structure, homodimer. Forms a heterotetramer with IscU, interacts with other sulfur acceptors. Requires pyridoxal 5'-phosphate as cofactor.

It is found in the cytoplasm. The catalysed reaction is (sulfur carrier)-H + L-cysteine = (sulfur carrier)-SH + L-alanine. The protein operates within cofactor biosynthesis; iron-sulfur cluster biosynthesis. Functionally, master enzyme that delivers sulfur to a number of partners involved in Fe-S cluster assembly, tRNA modification or cofactor biosynthesis. Catalyzes the removal of elemental sulfur atoms from cysteine to produce alanine. Functions as a sulfur delivery protein for Fe-S cluster synthesis onto IscU, an Fe-S scaffold assembly protein, as well as other S acceptor proteins. The chain is Cysteine desulfurase IscS from Rickettsia conorii (strain ATCC VR-613 / Malish 7).